Here is a 131-residue protein sequence, read N- to C-terminus: D-ribose pyranase (131 aa).

Residue His-20 is the Proton donor of the active site. Residues Asp-28, His-98, and 120–122 (YAN) each bind substrate.

Belongs to the RbsD / FucU family. RbsD subfamily. In terms of assembly, homodecamer.

Its subcellular location is the cytoplasm. It carries out the reaction beta-D-ribopyranose = beta-D-ribofuranose. It participates in carbohydrate metabolism; D-ribose degradation; D-ribose 5-phosphate from beta-D-ribopyranose: step 1/2. Catalyzes the interconversion of beta-pyran and beta-furan forms of D-ribose. This is D-ribose pyranase from Bacillus cytotoxicus (strain DSM 22905 / CIP 110041 / 391-98 / NVH 391-98).